We begin with the raw amino-acid sequence, 236 residues long: Small ribosomal subunit protein uS2c (236 aa).

The protein belongs to the universal ribosomal protein uS2 family.

It localises to the plastid. It is found in the chloroplast. In Physcomitrium patens (Spreading-leaved earth moss), this protein is Small ribosomal subunit protein uS2c (rps2).